A 798-amino-acid chain; its full sequence is ATP-dependent RNA helicase bel (798 aa).

The segment at 16 to 248 (VAGLDLNGGS…SRWKEGGGSN (233 aa)) is disordered. The span at 31-42 (PITSKTSTNSVT) shows a compositional bias: polar residues. 3 stretches are compositionally biased toward gly residues: residues 94–110 (RGGG…GGRG), 118–132 (YGYG…GGGG), and 154–178 (SGGG…GGSG). Phosphoserine is present on residues S177 and S179. Residues 198–209 (RNDRWQEPERPA) show a composition bias toward basic and acidic residues. 2 positions are modified to phosphoserine: S214 and S219. The Q motif motif lies at 295 to 323 (TSFDDVQLTEIIRNNVALARYDKPTPVQK). Residues 315–322 (YDKPTPVQ) and 339–346 (AQTGSGKT) contribute to the ATP site. The region spanning 326–515 (IPIIINGRDL…SDFLSNYIFL (190 aa)) is the Helicase ATP-binding domain. The DEAD box signature appears at 459–462 (DEAD). The Helicase C-terminal domain maps to 542–693 (YLLDLLSSIR…EIPSFMEDMS (152 aa)). S638 carries the post-translational modification Phosphoserine. 2 disordered regions span residues 689–765 (MEDM…SGGG) and 778–798 (GGSY…WWAQ). 2 stretches are compositionally biased toward gly residues: residues 706 to 717 (RGGGGRYGGGFG) and 740 to 750 (GGSGSGGGGGS).

This sequence belongs to the DEAD box helicase family. DDX3/DED1 subfamily. In terms of tissue distribution, vas and bel colocalize in nuage (perinuclear, electron-dense granules in germline cells) and at the oocyte posterior during oogenesis.

The protein resides in the cytoplasm. The enzyme catalyses ATP + H2O = ADP + phosphate + H(+). In terms of biological role, ATP-dependent RNA helicase that is essential and required for cellular function, larval growth, and for male and female fertility. Also required for RNA interference (RNAi), double-stranded RNA induces potent and specific gene silencing, by acting downstream of dsRNA internalization. RNAi is mediated by the RNA-induced silencing complex (RISC), a sequence-specific, multicomponent nuclease that destroys or silences messenger RNAs homologous to the silencing trigger. The sequence is that of ATP-dependent RNA helicase bel from Drosophila melanogaster (Fruit fly).